The sequence spans 90 residues: Phosphocarrier protein HPr (90 aa).

The HPr domain maps to 1–89; it reads MPAREITIIN…ELINNFFDEG (89 aa). Catalysis depends on H15, which acts as the Pros-phosphohistidine intermediate.

It belongs to the HPr family.

The protein localises to the cytoplasm. In terms of biological role, general (non sugar-specific) component of the phosphoenolpyruvate-dependent sugar phosphotransferase system (sugar PTS). This major carbohydrate active-transport system catalyzes the phosphorylation of incoming sugar substrates concomitantly with their translocation across the cell membrane. The phosphoryl group from phosphoenolpyruvate (PEP) is transferred to the phosphoryl carrier protein HPr by enzyme I. Phospho-HPr then transfers it to the PTS EIIA domain. The polypeptide is Phosphocarrier protein HPr (ptsH) (Pseudomonas putida (Arthrobacter siderocapsulatus)).